Here is a 288-residue protein sequence, read N- to C-terminus: Ras-like protein 1 (288 aa).

Gly-11–Ser-18 contributes to the GTP binding site. An Effector region motif is present at residues Tyr-33–Tyr-41. Residues Asp-58–Gln-62 and Asn-117–Asp-120 each bind GTP. The tract at residues Glu-176–Val-288 is disordered. Low complexity-rich tracts occupy residues Gln-178–Asn-216 and Pro-246–Lys-281. Cys-284 carries the S-palmitoyl cysteine lipid modification. Cys-285 carries the post-translational modification Cysteine methyl ester. Cys-285 carries the S-farnesyl cysteine lipid modification. Positions Val-286–Val-288 are cleaved as a propeptide — removed in mature form.

This sequence belongs to the small GTPase superfamily. Ras family.

It localises to the cell membrane. It catalyses the reaction GTP + H2O = GDP + phosphate + H(+). Alternates between an inactive form bound to GDP and an active form bound to GTP. Activated by a guanine nucleotide-exchange factor (GEF) and inactivated by a GTPase-activating protein (GAP). Functionally, required for the regulation of both a MAP kinase signaling pathway and a cAMP signaling pathway. The activation of these pathways contributes to the pathogenicity of the cells through the induction of the morphological transition from the yeast to the polarized filamentous form. The protein is Ras-like protein 1 (RAS1) of Candida albicans (strain WO-1) (Yeast).